The following is a 414-amino-acid chain: Glucose-1-phosphate adenylyltransferase (414 aa).

Alpha-D-glucose 1-phosphate-binding positions include G164, 181-182 (EK), and S199.

The protein belongs to the bacterial/plant glucose-1-phosphate adenylyltransferase family. In terms of assembly, homotetramer.

The catalysed reaction is alpha-D-glucose 1-phosphate + ATP + H(+) = ADP-alpha-D-glucose + diphosphate. The protein operates within glycan biosynthesis; glycogen biosynthesis. Involved in the biosynthesis of ADP-glucose, a building block required for the elongation reactions to produce glycogen. Catalyzes the reaction between ATP and alpha-D-glucose 1-phosphate (G1P) to produce pyrophosphate and ADP-Glc. This chain is Glucose-1-phosphate adenylyltransferase, found in Leifsonia xyli subsp. xyli (strain CTCB07).